Consider the following 128-residue polypeptide: Small ribosomal subunit protein uS11 (128 aa).

The protein belongs to the universal ribosomal protein uS11 family. In terms of assembly, part of the 30S ribosomal subunit. Interacts with proteins S7 and S18. Binds to IF-3.

Functionally, located on the platform of the 30S subunit, it bridges several disparate RNA helices of the 16S rRNA. Forms part of the Shine-Dalgarno cleft in the 70S ribosome. In Chromohalobacter salexigens (strain ATCC BAA-138 / DSM 3043 / CIP 106854 / NCIMB 13768 / 1H11), this protein is Small ribosomal subunit protein uS11.